The following is a 170-amino-acid chain: Fibroblast growth factor 2 (170 aa).

The segment at 1–21 (VGGRGRGRGTAAAARREPGGA) is disordered. Omega-N-methylarginine; alternate occurs at positions 4, 6, and 8. 3 positions are modified to symmetric dimethylarginine; alternate: Arg-4, Arg-6, and Arg-8. Low complexity predominate over residues 9-21 (GTAAAARREPGGA). Residue Asn-51 participates in heparin binding. The residue at position 97 (Tyr-97) is a Phosphotyrosine; by TEC. Lys-110 participates in a covalent cross-link: Glycyl lysine isopeptide (Lys-Gly) (interchain with G-Cter in SUMO1). Residues 143-159 (KRTGQYKLGSKTGPGQK) form a heparin-binding region.

The protein belongs to the heparin-binding growth factors family. Monomer. Homodimer. Interacts with FGFR1, FGFR2, FGFR3 and FGFR4. Affinity between fibroblast growth factors (FGFs) and their receptors is increased by heparan sulfate glycosaminoglycans that function as coreceptors. Interacts with CSPG4, FGFBP1 and TEC. Found in a complex with FGFBP1, FGF1 and FGF2. Interacts with FGFBP3. Interacts with integrin ITGAV:ITGB3; the interaction is required for FGF2 signaling. Interacts with SNORC (via the extracellular domain). Interacts with glypican GPC3. In terms of processing, the N-terminus of isoform 2 is blocked. Post-translationally, phosphorylation at Tyr-97 regulates FGF2 unconventional secretion.

It is found in the secreted. It localises to the nucleus. Acts as a ligand for FGFR1, FGFR2, FGFR3 and FGFR4. Also acts as an integrin ligand which is required for FGF2 signaling. Binds to integrin ITGAV:ITGB3. Plays an important role in the regulation of cell survival, cell division, cell differentiation and cell migration. Functions as a potent mitogen in vitro. Can induce angiogenesis. Mediates phosphorylation of ERK1/2 and thereby promotes retinal lens fiber differentiation. In Cavia porcellus (Guinea pig), this protein is Fibroblast growth factor 2 (FGF2).